A 956-amino-acid polypeptide reads, in one-letter code: MAM domain-containing glycosylphosphatidylinositol anchor protein 2 (956 aa).

Positions 1-25 (MDLLYGLVWLLTVLLEGISGQGVYA) are cleaved as a signal peptide. Ig-like domains lie at 27 to 127 (PTVR…IRVD) and 134 to 232 (PVVT…KMVS). Disulfide bonds link cysteine 62–cysteine 110 and cysteine 159–cysteine 216. N-linked (GlcNAc...) asparagine glycosylation is found at asparagine 92, asparagine 213, and asparagine 237. Ig-like domains lie at 242–328 (PSIK…NIIV), 340–436 (PDPY…VNIS), 442–533 (PNLT…ALVQ), and 540–627 (PAVE…FLVT). 2 cysteine pairs are disulfide-bonded: cysteine 264–cysteine 310 and cysteine 359–cysteine 417. Residues asparagine 434, asparagine 443, asparagine 504, asparagine 610, and asparagine 703 are each glycosylated (N-linked (GlcNAc...) asparagine). 2 disulfide bridges follow: cysteine 465-cysteine 515 and cysteine 561-cysteine 611. A Fibronectin type-III domain is found at 638–739 (DTYNPVWQNR…IRVIKYSAPV (102 aa)). Residues 746-921 (FHCGFEDGNI…VSIAEGECAK (176 aa)) enclose the MAM domain. A lipid anchor (GPI-anchor amidated aspartate) is attached at aspartate 931. The propeptide at 932–956 (GAVGILVHIWLFPIIVLISILSPRR) is removed in mature form.

As to quaternary structure, interacts (through the Ig-like domains) with NLGN2. Detected in Leydig cells, syncytiotrophoblast, duodenal villi epithelial cells and neutrophils from kidney and cutaneous squamous cell carcinoma (at protein level).

The protein resides in the cell membrane. May be involved in cell-cell interactions. This is MAM domain-containing glycosylphosphatidylinositol anchor protein 2 (MDGA2) from Homo sapiens (Human).